Reading from the N-terminus, the 247-residue chain is 14-3-3 protein gamma-A (247 aa).

The protein belongs to the 14-3-3 family. In terms of assembly, homodimer, and heterodimer with other family members.

The protein resides in the cytoplasm. In terms of biological role, adapter protein implicated in the regulation of a large spectrum of both general and specialized signaling pathways. Binds to a large number of partners, usually by recognition of a phosphoserine or phosphothreonine motif. Binding generally results in the modulation of the activity of the binding partner. The chain is 14-3-3 protein gamma-A (ywhag-a) from Xenopus laevis (African clawed frog).